Consider the following 702-residue polypeptide: Archaeal Lon protease (702 aa).

Residues 1–63 form a disordered region; it reads MSNESTNDAP…VGVEGDVSID (63 aa). Topologically, residues 1–183 are cytoplasmic; it reads MSNESTNDAP…EARKRNQMRS (183 aa). Residues 10–48 are compositionally biased toward acidic residues; sequence PPDDDPDDPEPSVDHDDTDGLQDDPADSVDDAGEVDDLE. 117 to 124 contributes to the ATP binding site; the sequence is GSPGTGKS. Residues 184-201 traverse the membrane as a helical segment; the sequence is FLMWIMILLAVGYALLIA. At 202 to 206 the chain is on the extracellular side; the sequence is TPARP. A helical transmembrane segment spans residues 207-223; that stretch reads LLALLSAAGIYLLFRYT. Residues 224 to 702 lie on the Cytoplasmic side of the membrane; that stretch reads NRGSDAMVPK…GTTGGNPSPQ (479 aa). The 181-residue stretch at 487–667 folds into the Lon proteolytic domain; the sequence is EEAVGRVNGL…SEVLDVALVG (181 aa). Catalysis depends on residues S574 and K617.

This sequence belongs to the peptidase S16 family. Archaeal LonB subfamily. As to quaternary structure, homohexamer. Organized in a ring with a central cavity.

The protein localises to the cell membrane. In terms of biological role, ATP-dependent serine protease that mediates the selective degradation of mutant and abnormal proteins as well as certain short-lived regulatory proteins. Degrades polypeptides processively. In Halobacterium salinarum (strain ATCC 700922 / JCM 11081 / NRC-1) (Halobacterium halobium), this protein is Archaeal Lon protease.